The primary structure comprises 864 residues: Arf-GAP with GTPase, ANK repeat and PH domain-containing protein 1 (864 aa).

Residues 66 to 276 (SRSVPELKVG…QTSNGGGSLS (211 aa)) are small GTPase-like. Residues 67–241 (RSVPELKVGI…TRKKQQLSIG (175 aa)) enclose the GLD domain. GTP-binding positions include 78 to 85 (GNLASGKS), 122 to 126 (IRDEG), and 178 to 181 (TQDA). Disordered regions lie at residues 266-343 (SQTS…IGSG), 405-455 (VPGK…QMAS), and 499-549 (TGLG…LSST). Positions 275–289 (LSDYSSSVPSTPSTS) are enriched in low complexity. The segment covering 322–337 (KGSDPDKDKKGLESRA) has biased composition (basic and acidic residues). In terms of domain architecture, PH spans 346–591 (IPIKQGMLLK…WVQAIESQIL (246 aa)). Polar residues predominate over residues 413–428 (ATSSCAPVASPKTNGL). Residues 507 to 517 (SSPSISSTTSP) show a composition bias toward low complexity. The span at 527–537 (ANRKKHRRKKS) shows a compositional bias: basic residues. Residues 538-549 (TSNFKVDGLSST) show a composition bias toward polar residues. Residues 612–732 (ALALQSIRNL…LFLSPLPCRD (121 aa)) form the Arf-GAP domain. The C4-type zinc finger occupies 627-650 (CVDCDAQSPDWASLNLGALMCIEC). ANK repeat units lie at residues 771-800 (DRRTSLHLACRKGNVVLVQLLIWYGVDVMA) and 804-833 (HGNTALAYAKQAVTSEVRELLLQYGCPDEQ). Low complexity predominate over residues 845–854 (KNNRNNNSNA). The segment at 845-864 (KNNRNNNSNAGGSGLMPTLI) is disordered.

The protein belongs to the centaurin gamma-like family. In terms of assembly, homodimer. Interacts with several subunits of the AP-3 protein complex.

It localises to the cytoplasm. Its function is as follows. GTPase-activating protein. Directly and specifically regulates the adapter protein 3 (AP-3)-dependent trafficking of proteins in the endosomal-lysosomal system. This Xenopus laevis (African clawed frog) protein is Arf-GAP with GTPase, ANK repeat and PH domain-containing protein 1 (agap1).